The sequence spans 221 residues: Endo-1,4-beta-xylanase 2 (221 aa).

Positions 1–19 (MVAFTSLLAGFAAIAGVLS) are cleaved as a signal peptide. In terms of domain architecture, GH11 spans 32–221 (QTIGPGTGYS…SSGSASITVS (190 aa)). N-linked (GlcNAc...) asparagine glycosylation is found at asparagine 69 and asparagine 92. Glutamate 117 functions as the Nucleophile in the catalytic mechanism. Catalysis depends on glutamate 208, which acts as the Proton donor.

This sequence belongs to the glycosyl hydrolase 11 (cellulase G) family.

The protein localises to the secreted. It carries out the reaction Endohydrolysis of (1-&gt;4)-beta-D-xylosidic linkages in xylans.. It participates in glycan degradation; xylan degradation. In terms of biological role, endo-1,4-beta-xylanase involved in the hydrolysis of xylan, a major structural heterogeneous polysaccharide found in plant biomass representing the second most abundant polysaccharide in the biosphere, after cellulose. The sequence is that of Endo-1,4-beta-xylanase 2 (Xyn2) from Trichoderma harzianum (Hypocrea lixii).